We begin with the raw amino-acid sequence, 213 residues long: Adenylate kinase (213 aa).

10–15 is an ATP binding site; it reads GSGKGS. An NMP region spans residues 30-60; sequence STGNLFRAILKEDSELARKIKEINVSGGKLV. AMP-binding positions include T31, R36, 58 to 60, 87 to 90, and Q94; these read KLV and GYPR. Positions 123–160 are LID; the sequence is GRWMCPKCAGIYNIHFKKPQVHGLCDNDQATLYQRADD. R124 provides a ligand contact to ATP. C127 and C130 together coordinate Zn(2+). 133–134 serves as a coordination point for ATP; sequence IY. Residues C147 and D150 each contribute to the Zn(2+) site. Residues R157 and R168 each coordinate AMP. Position 196 (Q196) interacts with ATP.

Belongs to the adenylate kinase family. Monomer.

The protein resides in the cytoplasm. The enzyme catalyses AMP + ATP = 2 ADP. Its pathway is purine metabolism; AMP biosynthesis via salvage pathway; AMP from ADP: step 1/1. Catalyzes the reversible transfer of the terminal phosphate group between ATP and AMP. Plays an important role in cellular energy homeostasis and in adenine nucleotide metabolism. The sequence is that of Adenylate kinase from Ureaplasma parvum serovar 3 (strain ATCC 27815 / 27 / NCTC 11736).